Here is a 375-residue protein sequence, read N- to C-terminus: Arabinose metabolism transcriptional repressor (375 aa).

Residues 1 to 70 enclose the HTH gntR-type domain; the sequence is METKYNFVKQ…QGAGTFCADR (70 aa). The segment at residues 30–49 is a DNA-binding region (H-T-H motif); that stretch reads ENELMKEYNVSRHTVRKAID.

The protein localises to the cytoplasm. Functionally, transcriptional repressor of the arabinose utilization genes. The sequence is that of Arabinose metabolism transcriptional repressor (araR) from Halalkalibacterium halodurans (strain ATCC BAA-125 / DSM 18197 / FERM 7344 / JCM 9153 / C-125) (Bacillus halodurans).